The primary structure comprises 441 residues: Polycomb protein EED (441 aa).

The segment at 1–72 is disordered; it reads MSEREVSTAP…PGRKSWGKGK (72 aa). N-acetylserine is present on Ser-2. A phosphoserine mark is found at Ser-2 and Ser-34. Residues 45–61 show a composition bias toward polar residues; it reads ESGTNTERPDTPTNTPN. At Thr-55 the chain carries Phosphothreonine. Lys-66 is modified (N6,N6,N6-trimethyllysine; alternate). N6,N6-dimethyllysine; alternate is present on Lys-66. Lys-66 is subject to N6-methyllysine; alternate. Residues 81 to 441 are interaction with EZH2; that stretch reads SFKCVNSLKE…ASIWRWDRLR (361 aa). 4 WD repeats span residues 91-134, 142-185, 188-228, and 234-275; these read DHNQ…EIRL, DADE…CIKH, GHGN…LVAI, and GHRD…NAIK. Required for interaction with the matrix protein MA of HIV-1 regions lie at residues 149–303 and 301–441; these read TCAW…STRD and TRDI…DRLR. Lys-197, Lys-268, and Lys-284 each carry N6,N6,N6-trimethyllysine; alternate. 3 positions are modified to N6,N6-dimethyllysine; alternate: Lys-197, Lys-268, and Lys-284. N6-methyllysine; alternate is present on residues Lys-197, Lys-268, and Lys-284. 3 WD repeats span residues 304–341, 359–399, and 408–441; these read IHRN…DDID, SQCD…PHKA, and KCGA…DRLR.

It belongs to the WD repeat ESC family. In terms of assembly, component of the PRC2/EED-EZH2 complex, which includes EED, EZH2, SUZ12, RBBP4 and RBBP7 and possibly AEBP2. The minimum components required for methyltransferase activity of the PRC2/EED-EZH2 complex are EED, EZH2 and SUZ12. Component of the PRC2/EED-EZH1 complex, which includes EED, EZH1, SUZ12, RBBP4 and AEBP2. The PRC2 complex may also interact with DNMT1, DNMT3A, DNMT3B and PHF1 via the EZH2 subunit and with SIRT1 via the SUZ12 subunit. Interacts with HDAC, HDAC2, histone H1 and YY1. May interact with ITGA4, ITGAE and ITGB7. Interacts with CDYL. Interacts with BMAL1. Interacts with KMT2A/MLL1. As to quaternary structure, (Microbial infection) May interact with the MA protein of HIV-1. Methylated. Binding to histone H1 'Lys-26' promotes mono-, di-, and trimethylation of internal lysines. In terms of tissue distribution, expressed in brain, colon, heart, kidney, liver, lung, muscle, ovary, peripheral blood leukocytes, pancreas, placenta, prostate, spleen, small intestine, testis, thymus and uterus. Appears to be overexpressed in breast and colon cancer.

Its subcellular location is the nucleus. The protein localises to the chromosome. Its function is as follows. Polycomb group (PcG) protein. Component of the PRC2/EED-EZH2 complex, which methylates 'Lys-9' and 'Lys-27' of histone H3, leading to transcriptional repression of the affected target gene. Also recognizes 'Lys-26' trimethylated histone H1 with the effect of inhibiting PRC2 complex methyltransferase activity on nucleosomal histone H3 'Lys-27', whereas H3 'Lys-27' recognition has the opposite effect, enabling the propagation of this repressive mark. The PRC2/EED-EZH2 complex may also serve as a recruiting platform for DNA methyltransferases, thereby linking two epigenetic repression systems. Genes repressed by the PRC2/EED-EZH2 complex include HOXC8, HOXA9, MYT1 and CDKN2A. This chain is Polycomb protein EED, found in Homo sapiens (Human).